The sequence spans 39 residues: Potassium channel toxin alpha-KTx 2.18 (39 aa).

Cystine bridges form between Cys-7/Cys-29, Cys-13/Cys-34, and Cys-17/Cys-36. Residue Ile-39 is modified to Isoleucine amide.

This sequence belongs to the short scorpion toxin superfamily. Potassium channel inhibitor family. Alpha-KTx 02 subfamily. As to expression, expressed by the venom gland.

Its subcellular location is the secreted. Its function is as follows. Weakly blocks Kv1.3/KCNA3 voltage-gated potassium channels. The polypeptide is Potassium channel toxin alpha-KTx 2.18 (Centruroides limpidus (Mexican scorpion)).